Here is a 244-residue protein sequence, read N- to C-terminus: Centromere protein H (244 aa).

Residue Met-1 is modified to N-acetylmethionine. Positions 1–33 (METQSEEQAVTKPADSGGEGGPPQVAGAQAARP) are disordered. Phosphoserine is present on Ser-16. Residues 22–31 (PPQVAGAQAA) are compositionally biased toward low complexity. A Glycyl lysine isopeptide (Lys-Gly) (interchain with G-Cter in SUMO2) cross-link involves residue Lys-64. A Phosphothreonine modification is found at Thr-65. Coiled-coil stretches lie at residues 66–104 (PEQI…DRMQ) and 146–189 (DLEE…MENS).

It belongs to the CENP-H/MCM16 family. As to quaternary structure, self-associates. Component of the CENPA-NAC complex, at least composed of CENPA, CENPC, CENPH, CENPM, CENPN, CENPT and CENPU. The CENPA-NAC complex interacts with the CENPA-CAD complex, composed of CENPI, CENPK, CENPL, CENPO, CENPP, CENPQ, CENPR and CENPS. Interacts with KIF2C and NDC80.

Its subcellular location is the nucleus. The protein localises to the chromosome. It is found in the centromere. The protein resides in the kinetochore. In terms of biological role, component of the CENPA-NAC (nucleosome-associated) complex, a complex that plays a central role in assembly of kinetochore proteins, mitotic progression and chromosome segregation. The CENPA-NAC complex recruits the CENPA-CAD (nucleosome distal) complex and may be involved in incorporation of newly synthesized CENPA into centromeres. In Bos taurus (Bovine), this protein is Centromere protein H (CENPH).